Consider the following 916-residue polypeptide: Dual serine/threonine and tyrosine protein kinase (916 aa).

The segment covering 1–19 has biased composition (basic and acidic residues); sequence MQRDGTRSARRMDEGDRRT. The interval 1 to 27 is disordered; the sequence is MQRDGTRSARRMDEGDRRTGSAGRSGS. The 255-residue stretch at 641–895 folds into the Protein kinase domain; sequence PRIGRELGRG…PLMGIVQPML (255 aa). ATP contacts are provided by residues 647–655 and Lys-670; that span reads LGRGQYGVV. Residue Asp-766 is the Proton acceptor of the active site.

Belongs to the protein kinase superfamily. Ser/Thr protein kinase family.

The protein resides in the cytoplasm. It is found in the cell membrane. It localises to the apical cell membrane. The protein localises to the basolateral cell membrane. Its subcellular location is the cell junction. The catalysed reaction is L-seryl-[protein] + ATP = O-phospho-L-seryl-[protein] + ADP + H(+). It carries out the reaction L-threonyl-[protein] + ATP = O-phospho-L-threonyl-[protein] + ADP + H(+). It catalyses the reaction L-tyrosyl-[protein] + ATP = O-phospho-L-tyrosyl-[protein] + ADP + H(+). In terms of biological role, may act as a positive regulator of ERK phosphorylation downstream of fibroblast growth factor-receptor activation. May induce both caspase-dependent apoptosis and caspase-independent cell death. May play a role in the embryonic development. This chain is Dual serine/threonine and tyrosine protein kinase (dstyk), found in Xenopus laevis (African clawed frog).